The following is a 30-amino-acid chain: Snaclec carinactivase-1 regulatory subunit 14 kDa chain (30 aa).

One can recognise a C-type lectin domain in the interval 1–30 (DCLPDWFHYEGHCYRVFDEPKKWADAEKFC). Cys-2 and Cys-13 are oxidised to a cystine.

This sequence belongs to the snaclec family. As to quaternary structure, heterodimer of a metalloproteinase subunit and a regulatory subunit comprising two polypeptides disulfide-linked (14 kDa and 17 kDa chains). Expressed by the venom gland.

The protein localises to the secreted. In terms of biological role, calcium-dependent prothrombin activator. This protein may activate prothrombin via recognition by the regulatory subunit of the calcium ion bound conformation of its gamma-carboxyglutamic acid (GLA) domain, and the subsequent conversion of prothrombin to active thrombin is catalyzed by the catalytic subunit. In Echis carinatus (Saw-scaled viper), this protein is Snaclec carinactivase-1 regulatory subunit 14 kDa chain.